The sequence spans 97 residues: Large ribosomal subunit protein bL27 (97 aa).

The propeptide occupies 1 to 12 (MLNLNLANLQFM). A disordered region spans residues 15–37 (KKGGGSTSNGRDSQAKRLGAKAA).

It belongs to the bacterial ribosomal protein bL27 family. In terms of processing, the N-terminus is cleaved by ribosomal processing cysteine protease Prp.

This chain is Large ribosomal subunit protein bL27, found in Streptococcus suis (strain 98HAH33).